An 867-amino-acid polypeptide reads, in one-letter code: Bifunctional isopimaradiene synthase, chloroplastic (867 aa).

A chloroplast-targeting transit peptide spans 1 to 68 (MALLSSSLSS…VGEGTTSLPY (68 aa)). Lys267 serves as a coordination point for substrate. Mg(2+) is bound by residues Asp400 and Asp402. The DXDD motif motif lies at 400–403 (DIDD). Lys487 contributes to the substrate binding site. 5 residues coordinate Mg(2+): Asp619, Asp623, Asn763, Thr767, and Glu771. The short motif at 619–623 (DDLYD) is the DDXXD motif element.

The protein belongs to the terpene synthase family. Tpsd subfamily. Mg(2+) is required as a cofactor.

It is found in the plastid. The protein resides in the chloroplast. It catalyses the reaction (2E,6E,10E)-geranylgeranyl diphosphate = (+)-copalyl diphosphate. It carries out the reaction (+)-copalyl diphosphate = isopimara-7,15-diene + diphosphate. It participates in terpene metabolism; oleoresin biosynthesis. In terms of biological role, involved in defensive oleoresin formation in conifers in response to insect attack or other injury. Involved in diterpene (C20) olefins biosynthesis. Bifunctional enzyme that catalyzes two sequential cyclizations of geranylgeranyl diphosphate (GGPP) to isopimara-7,15-diene. The chain is Bifunctional isopimaradiene synthase, chloroplastic (TPS-ISO) from Picea abies (Norway spruce).